Reading from the N-terminus, the 148-residue chain is Transcriptional regulator MraZ (148 aa).

SpoVT-AbrB domains lie at 5–51 and 80–123; these read STQL…PQPV and ASDV…DMAK.

It belongs to the MraZ family. Forms oligomers.

The protein resides in the cytoplasm. It localises to the nucleoid. The protein is Transcriptional regulator MraZ of Nitrosomonas europaea (strain ATCC 19718 / CIP 103999 / KCTC 2705 / NBRC 14298).